The chain runs to 238 residues: tRNA (guanine-N(1)-)-methyltransferase (238 aa).

S-adenosyl-L-methionine-binding positions include Gly108 and 127–132 (LGDFVL).

The protein belongs to the RNA methyltransferase TrmD family. As to quaternary structure, homodimer.

It localises to the cytoplasm. It catalyses the reaction guanosine(37) in tRNA + S-adenosyl-L-methionine = N(1)-methylguanosine(37) in tRNA + S-adenosyl-L-homocysteine + H(+). Specifically methylates guanosine-37 in various tRNAs. The sequence is that of tRNA (guanine-N(1)-)-methyltransferase from Streptococcus uberis (strain ATCC BAA-854 / 0140J).